The following is a 484-amino-acid chain: Nuclear rim protein 1 (484 aa).

A Phosphoserine modification is found at serine 3. Helical transmembrane passes span 145-165 (FTIF…MFGY) and 237-257 (IPTN…IVFL). The disordered stretch occupies residues 416 to 457 (SSNENLEKGGAFLPNQDQNRPSKSLSPLRKTPLSARQKRFEG). Phosphoserine is present on serine 417. A compositionally biased stretch (polar residues) spans 430-440 (NQDQNRPSKSL). Residue serine 474 is modified to Phosphoserine.

This sequence belongs to the NUR1 family. Interacts with CSM1.

Its subcellular location is the nucleus membrane. Its function is as follows. Member of a perinuclear network that controls recombination at multiple loci to maintain genome stability. Required for rDNA repeat stability. The chain is Nuclear rim protein 1 (NUR1) from Saccharomyces cerevisiae (strain JAY291) (Baker's yeast).